A 74-amino-acid chain; its full sequence is Cell division protein ZapB (74 aa).

Residues 2 to 74 (TLDLLEQLES…LVGKIEETES (73 aa)) are a coiled coil.

It belongs to the ZapB family. As to quaternary structure, homodimer. The ends of the coiled-coil dimer bind to each other, forming polymers. Interacts with FtsZ.

Its subcellular location is the cytoplasm. Non-essential, abundant cell division factor that is required for proper Z-ring formation. It is recruited early to the divisome by direct interaction with FtsZ, stimulating Z-ring assembly and thereby promoting cell division earlier in the cell cycle. Its recruitment to the Z-ring requires functional FtsA or ZipA. The chain is Cell division protein ZapB from Psychromonas ingrahamii (strain DSM 17664 / CCUG 51855 / 37).